The primary structure comprises 219 residues: Proteasome subunit beta (219 aa).

Positions Met1 to Gly14 are cleaved as a propeptide — removed in mature form; by autocatalysis. The Nucleophile role is filled by Thr15.

This sequence belongs to the peptidase T1B family. In terms of assembly, the 20S proteasome core is composed of 14 alpha and 14 beta subunits that assemble into four stacked heptameric rings, resulting in a barrel-shaped structure. The two inner rings, each composed of seven catalytic beta subunits, are sandwiched by two outer rings, each composed of seven alpha subunits. The catalytic chamber with the active sites is on the inside of the barrel. Has a gated structure, the ends of the cylinder being occluded by the N-termini of the alpha-subunits. Is capped at one or both ends by the proteasome regulatory ATPase, PAN.

It is found in the cytoplasm. The enzyme catalyses Cleavage of peptide bonds with very broad specificity.. With respect to regulation, the formation of the proteasomal ATPase PAN-20S proteasome complex, via the docking of the C-termini of PAN into the intersubunit pockets in the alpha-rings, triggers opening of the gate for substrate entry. Interconversion between the open-gate and close-gate conformations leads to a dynamic regulation of the 20S proteasome proteolysis activity. Its function is as follows. Component of the proteasome core, a large protease complex with broad specificity involved in protein degradation. This is Proteasome subunit beta from Methanococcus maripaludis (strain C6 / ATCC BAA-1332).